The chain runs to 333 residues: NADH-quinone oxidoreductase subunit H (333 aa).

8 helical membrane-spanning segments follow: residues 8–28 (VLAA…YLVW), 75–95 (ILFM…FVTI), 108–128 (IGLL…LLAG), 154–174 (MLIT…IEIV), 191–211 (PGLF…CSLA), 251–271 (IVIG…CPFG), 273–293 (FPGV…FIWI), and 312–332 (ILIP…KVFA).

Belongs to the complex I subunit 1 family. NDH-1 is composed of 14 different subunits. Subunits NuoA, H, J, K, L, M, N constitute the membrane sector of the complex.

It localises to the cell inner membrane. The catalysed reaction is a quinone + NADH + 5 H(+)(in) = a quinol + NAD(+) + 4 H(+)(out). Functionally, NDH-1 shuttles electrons from NADH, via FMN and iron-sulfur (Fe-S) centers, to quinones in the respiratory chain. The immediate electron acceptor for the enzyme in this species is believed to be ubiquinone. Couples the redox reaction to proton translocation (for every two electrons transferred, four hydrogen ions are translocated across the cytoplasmic membrane), and thus conserves the redox energy in a proton gradient. This subunit may bind ubiquinone. This chain is NADH-quinone oxidoreductase subunit H, found in Desulfotalea psychrophila (strain LSv54 / DSM 12343).